Reading from the N-terminus, the 470-residue chain is Probable E3 ubiquitin-protein ligase TRIML1 (470 aa).

The RING-type zinc finger occupies 22-63; that stretch reads CFICLDYFSSPVTTECGHSFCLMCLLKSWEEHNTPLSCPECW. 2 coiled-coil regions span residues 135 to 170 and 196 to 235; these read SEAE…KERV and KEEE…GKMI. The B30.2/SPRY domain occupies 273–470; sequence TELSLCHITG…NTDPLIICHI (198 aa).

As to quaternary structure, interacts with USP5. As to expression, testis.

It carries out the reaction S-ubiquitinyl-[E2 ubiquitin-conjugating enzyme]-L-cysteine + [acceptor protein]-L-lysine = [E2 ubiquitin-conjugating enzyme]-L-cysteine + N(6)-ubiquitinyl-[acceptor protein]-L-lysine.. The protein operates within protein modification; protein ubiquitination. In terms of biological role, probable E3 ubiquitin-protein ligase which plays an important role in blastocyst development. Involved in progression of blastocyst stage and subsequent embryo development. The polypeptide is Probable E3 ubiquitin-protein ligase TRIML1 (Triml1) (Mus musculus (Mouse)).